A 736-amino-acid chain; its full sequence is Protein kinase C epsilon type (736 aa).

In terms of domain architecture, C2 spans Met-1 to Ile-117. The residue at position 62 (Ser-62) is a Phosphoserine. The Phorbol-ester/DAG-type 1 zinc-finger motif lies at Gly-169–Val-220. At Thr-228 the chain carries Phosphothreonine. Ser-234 is modified (phosphoserine). Residues Pro-242–Cys-292 form a Phorbol-ester/DAG-type 2 zinc finger. At Thr-309 the chain carries Phosphothreonine. Residues Pro-310 to Leu-356 form a disordered region. Residues Ser-316, Ser-329, and Ser-337 each carry the phosphoserine modification. Ser-346 is modified (phosphoserine; by GSK3-beta). Thr-349 is subject to Phosphothreonine. Position 350 is a phosphoserine; by MAPK11 and MAPK14 (Ser-350). Ser-368 bears the Phosphoserine; by autocatalysis mark. The disordered stretch occupies residues Phe-369 to Gly-397. Residue Ser-388 is modified to Phosphoserine. The region spanning Phe-407–Phe-667 is the Protein kinase domain. ATP is bound by residues Leu-413 to Val-421 and Lys-436. The active-site Proton acceptor is the Asp-531. Residue Thr-565 is modified to Phosphothreonine; by PDPK1. Residues Lys-668–Pro-736 enclose the AGC-kinase C-terminal domain. Thr-702 is modified (phosphothreonine). Phosphothreonine; by autocatalysis is present on Thr-709. A Phosphoserine; by autocatalysis modification is found at Ser-728.

The protein belongs to the protein kinase superfamily. AGC Ser/Thr protein kinase family. PKC subfamily. In terms of assembly, forms a ternary complex with TRIM63 and RACK1/GN2BL1. Can form a complex with PDLIM5 and N-type calcium channel. Interacts with COPB1. Interacts with DGKQ. Interacts with STAT3. Interacts with YWHAB. Interacts with HSP90AB1; promotes functional activation in a heat shock-dependent manner. Interacts (via phorbol-ester/DAG-type 2 domain) with PRPH and VIM. Interacts with NLRP5/MATER. Phosphorylation on Thr-565 by PDPK1 triggers autophosphorylation on Ser-728. Phosphorylation in the hinge domain at Ser-350 by MAPK11 or MAPK14, Ser-346 by GSK3B and Ser-368 by autophosphorylation is required for interaction with YWHAB. In response to growth factors, phosphorylated at Thr-702 and Ser-728 by the mTORC2 complex, promoting autophosphorylation and activation of PRKCE.

It localises to the cytoplasm. Its subcellular location is the cytoskeleton. The protein resides in the cell membrane. The protein localises to the perinuclear region. It is found in the nucleus. The catalysed reaction is L-seryl-[protein] + ATP = O-phospho-L-seryl-[protein] + ADP + H(+). It catalyses the reaction L-threonyl-[protein] + ATP = O-phospho-L-threonyl-[protein] + ADP + H(+). Novel PKCs (PRKCD, PRKCE, PRKCH and PRKCQ) are calcium-insensitive, but activated by diacylglycerol (DAG) and phosphatidylserine. Three specific sites; Thr-565 (activation loop of the kinase domain), Thr-709 (turn motif) and Ser-728 (hydrophobic region), need to be phosphorylated for its full activation. Its function is as follows. Calcium-independent, phospholipid- and diacylglycerol (DAG)-dependent serine/threonine-protein kinase that plays essential roles in the regulation of multiple cellular processes linked to cytoskeletal proteins, such as cell adhesion, motility, migration and cell cycle, functions in neuron growth and ion channel regulation, and is involved in immune response, cancer cell invasion and regulation of apoptosis. Mediates cell adhesion to the extracellular matrix via integrin-dependent signaling, by mediating angiotensin-2-induced activation of integrin beta-1 (ITGB1) in cardiac fibroblasts. Phosphorylates MARCKS, which phosphorylates and activates PTK2/FAK, leading to the spread of cardiomyocytes. Involved in the control of the directional transport of ITGB1 in mesenchymal cells by phosphorylating vimentin (VIM), an intermediate filament (IF) protein. In epithelial cells, associates with and phosphorylates keratin-8 (KRT8), which induces targeting of desmoplakin at desmosomes and regulates cell-cell contact. Phosphorylates IQGAP1, which binds to CDC42, mediating epithelial cell-cell detachment prior to migration. During cytokinesis, forms a complex with YWHAB, which is crucial for daughter cell separation, and facilitates abscission by a mechanism which may implicate the regulation of RHOA. In cardiac myocytes, regulates myofilament function and excitation coupling at the Z-lines, where it is indirectly associated with F-actin via interaction with COPB1. During endothelin-induced cardiomyocyte hypertrophy, mediates activation of PTK2/FAK, which is critical for cardiomyocyte survival and regulation of sarcomere length. Plays a role in the pathogenesis of dilated cardiomyopathy via persistent phosphorylation of troponin I (TNNI3). Involved in nerve growth factor (NFG)-induced neurite outgrowth and neuron morphological change independently of its kinase activity, by inhibition of RHOA pathway, activation of CDC42 and cytoskeletal rearrangement. May be involved in presynaptic facilitation by mediating phorbol ester-induced synaptic potentiation. Phosphorylates gamma-aminobutyric acid receptor subunit gamma-2 (GABRG2), which reduces the response of GABA receptors to ethanol and benzodiazepines and may mediate acute tolerance to the intoxicating effects of ethanol. Upon PMA treatment, phosphorylates the capsaicin- and heat-activated cation channel TRPV1, which is required for bradykinin-induced sensitization of the heat response in nociceptive neurons. Is able to form a complex with PDLIM5 and N-type calcium channel, and may enhance channel activities and potentiates fast synaptic transmission by phosphorylating the pore-forming alpha subunit CACNA1B (CaV2.2). Downstream of TLR4, plays an important role in the lipopolysaccharide (LPS)-induced immune response by phosphorylating and activating TICAM2/TRAM, which in turn activates the transcription factor IRF3 and subsequent cytokines production. In differentiating erythroid progenitors, is regulated by EPO and controls the protection against the TNFSF10/TRAIL-mediated apoptosis, via BCL2. May be involved in the regulation of the insulin-induced phosphorylation and activation of AKT1. Phosphorylates NLRP5/MATER and may thereby modulate AKT pathway activation in cumulus cells. Phosphorylates and activates LRRK1, which phosphorylates RAB proteins involved in intracellular trafficking. The protein is Protein kinase C epsilon type (PRKCE) of Oryctolagus cuniculus (Rabbit).